Consider the following 201-residue polypeptide: Potassium-transporting ATPase KdpC subunit (201 aa).

Residues 7–27 (PAFVVLIALTALTGLAYPLAM) traverse the membrane as a helical segment.

Belongs to the KdpC family. The system is composed of three essential subunits: KdpA, KdpB and KdpC.

It is found in the cell inner membrane. Part of the high-affinity ATP-driven potassium transport (or Kdp) system, which catalyzes the hydrolysis of ATP coupled with the electrogenic transport of potassium into the cytoplasm. This subunit acts as a catalytic chaperone that increases the ATP-binding affinity of the ATP-hydrolyzing subunit KdpB by the formation of a transient KdpB/KdpC/ATP ternary complex. The polypeptide is Potassium-transporting ATPase KdpC subunit (Xanthobacter autotrophicus (strain ATCC BAA-1158 / Py2)).